A 163-amino-acid chain; its full sequence is Putative 4-hydroxy-4-methyl-2-oxoglutarate aldolase (163 aa).

Residues 76 to 79 (GDMI) and R98 each bind substrate. An a divalent metal cation-binding site is contributed by D99.

Belongs to the class II aldolase/RraA-like family. In terms of assembly, homotrimer. A divalent metal cation serves as cofactor.

The enzyme catalyses 4-hydroxy-4-methyl-2-oxoglutarate = 2 pyruvate. It catalyses the reaction oxaloacetate + H(+) = pyruvate + CO2. In terms of biological role, catalyzes the aldol cleavage of 4-hydroxy-4-methyl-2-oxoglutarate (HMG) into 2 molecules of pyruvate. Also contains a secondary oxaloacetate (OAA) decarboxylase activity due to the common pyruvate enolate transition state formed following C-C bond cleavage in the retro-aldol and decarboxylation reactions. This chain is Putative 4-hydroxy-4-methyl-2-oxoglutarate aldolase, found in Pseudomonas fluorescens (strain Pf0-1).